A 137-amino-acid chain; its full sequence is Nucleoside diphosphate kinase (137 aa).

ATP contacts are provided by Lys9, Phe57, Arg85, Thr91, Arg102, and Asn112. The active-site Pros-phosphohistidine intermediate is the His115.

This sequence belongs to the NDK family. As to quaternary structure, homotetramer. Mg(2+) serves as cofactor.

The protein localises to the cytoplasm. The enzyme catalyses a 2'-deoxyribonucleoside 5'-diphosphate + ATP = a 2'-deoxyribonucleoside 5'-triphosphate + ADP. The catalysed reaction is a ribonucleoside 5'-diphosphate + ATP = a ribonucleoside 5'-triphosphate + ADP. Functionally, major role in the synthesis of nucleoside triphosphates other than ATP. The ATP gamma phosphate is transferred to the NDP beta phosphate via a ping-pong mechanism, using a phosphorylated active-site intermediate. This Campylobacter hominis (strain ATCC BAA-381 / DSM 21671 / CCUG 45161 / LMG 19568 / NCTC 13146 / CH001A) protein is Nucleoside diphosphate kinase.